Here is a 270-residue protein sequence, read N- to C-terminus: 3-methyl-2-oxobutanoate hydroxymethyltransferase (270 aa).

Mg(2+) is bound by residues Asp-50 and Asp-89. 3-methyl-2-oxobutanoate-binding positions include 50 to 51, Asp-89, and Lys-118; that span reads DS. Glu-120 is a Mg(2+) binding site. Catalysis depends on Glu-187, which acts as the Proton acceptor.

The protein belongs to the PanB family. As to quaternary structure, homodecamer; pentamer of dimers. Mg(2+) serves as cofactor.

Its subcellular location is the cytoplasm. It carries out the reaction 3-methyl-2-oxobutanoate + (6R)-5,10-methylene-5,6,7,8-tetrahydrofolate + H2O = 2-dehydropantoate + (6S)-5,6,7,8-tetrahydrofolate. Its pathway is cofactor biosynthesis; (R)-pantothenate biosynthesis; (R)-pantoate from 3-methyl-2-oxobutanoate: step 1/2. Its function is as follows. Catalyzes the reversible reaction in which hydroxymethyl group from 5,10-methylenetetrahydrofolate is transferred onto alpha-ketoisovalerate to form ketopantoate. This chain is 3-methyl-2-oxobutanoate hydroxymethyltransferase, found in Helicobacter pylori (strain HPAG1).